The primary structure comprises 204 residues: Thymidine kinase (204 aa).

ATP is bound by residues 23-30 (GSMFSGKT) and 95-98 (DEAQ). The active-site Proton acceptor is the Glu96. Positions 152, 155, 184, and 187 each coordinate Zn(2+).

The protein belongs to the thymidine kinase family. As to quaternary structure, homotetramer.

The protein resides in the cytoplasm. It carries out the reaction thymidine + ATP = dTMP + ADP + H(+). The protein is Thymidine kinase of Porphyromonas gingivalis (strain ATCC 33277 / DSM 20709 / CIP 103683 / JCM 12257 / NCTC 11834 / 2561).